Consider the following 354-residue polypeptide: Chorismate synthase (354 aa).

Residues R48 and R54 each coordinate NADP(+). FMN contacts are provided by residues 125-127, 238-239, G278, 293-297, and R319; these read RSS, NA, and KPTSS.

This sequence belongs to the chorismate synthase family. Homotetramer. FMNH2 serves as cofactor.

It catalyses the reaction 5-O-(1-carboxyvinyl)-3-phosphoshikimate = chorismate + phosphate. The protein operates within metabolic intermediate biosynthesis; chorismate biosynthesis; chorismate from D-erythrose 4-phosphate and phosphoenolpyruvate: step 7/7. In terms of biological role, catalyzes the anti-1,4-elimination of the C-3 phosphate and the C-6 proR hydrogen from 5-enolpyruvylshikimate-3-phosphate (EPSP) to yield chorismate, which is the branch point compound that serves as the starting substrate for the three terminal pathways of aromatic amino acid biosynthesis. This reaction introduces a second double bond into the aromatic ring system. The polypeptide is Chorismate synthase (Buchnera aphidicola subsp. Acyrthosiphon pisum (strain 5A)).